The following is a 227-amino-acid chain: Ribonuclease 3 (227 aa).

The RNase III domain occupies 4–133; the sequence is FEELEKLLDY…LIAAIYLDSD (130 aa). A Mg(2+)-binding site is contributed by glutamate 46. Aspartate 50 is a catalytic residue. Residues asparagine 119 and glutamate 122 each coordinate Mg(2+). The active site involves glutamate 122. The DRBM domain maps to 158–226; that stretch reads DPKTALQEWA…ARELLHKLKL (69 aa).

This sequence belongs to the ribonuclease III family. In terms of assembly, homodimer. It depends on Mg(2+) as a cofactor.

It localises to the cytoplasm. The enzyme catalyses Endonucleolytic cleavage to 5'-phosphomonoester.. Its function is as follows. Digests double-stranded RNA. Involved in the processing of primary rRNA transcript to yield the immediate precursors to the large and small rRNAs (23S and 16S). Processes some mRNAs, and tRNAs when they are encoded in the rRNA operon. Processes pre-crRNA and tracrRNA of type II CRISPR loci if present in the organism. This chain is Ribonuclease 3, found in Rickettsia bellii (strain OSU 85-389).